The sequence spans 233 residues: Large ribosomal subunit protein uL1 (233 aa).

This sequence belongs to the universal ribosomal protein uL1 family. Part of the 50S ribosomal subunit.

Its function is as follows. Binds directly to 23S rRNA. The L1 stalk is quite mobile in the ribosome, and is involved in E site tRNA release. Functionally, protein L1 is also a translational repressor protein, it controls the translation of the L11 operon by binding to its mRNA. This is Large ribosomal subunit protein uL1 from Brucella anthropi (strain ATCC 49188 / DSM 6882 / CCUG 24695 / JCM 21032 / LMG 3331 / NBRC 15819 / NCTC 12168 / Alc 37) (Ochrobactrum anthropi).